Consider the following 281-residue polypeptide: DegV domain-containing protein DR_1986 (281 aa).

A DegV domain is found at 3–278 (IAIVTDSTSD…PGAVGVALEP (276 aa)). T61 and S93 together coordinate hexadecanoate.

Functionally, may bind long-chain fatty acids, such as palmitate, and may play a role in lipid transport or fatty acid metabolism. This Deinococcus radiodurans (strain ATCC 13939 / DSM 20539 / JCM 16871 / CCUG 27074 / LMG 4051 / NBRC 15346 / NCIMB 9279 / VKM B-1422 / R1) protein is DegV domain-containing protein DR_1986.